A 655-amino-acid polypeptide reads, in one-letter code: THO complex subunit 1 (655 aa).

Disordered regions lie at residues 403-427 and 539-574; these read ERPAETKPIRPSRKRQAPEDFLGKG and PSEEIKTGEEDDDENGDNLLKDSNDSPSIQSKAVTN. Residues 415 to 431 carry the Nuclear localization signal motif; it reads RKRQAPEDFLGKGPDRK. The segment covering 418–427 has biased composition (basic and acidic residues); that stretch reads QAPEDFLGKG. A compositionally biased stretch (polar residues) spans 563–574; it reads DSPSIQSKAVTN. A Death domain is found at 573–655; that stretch reads TNSQMDEIAA…NNIADNLSET (83 aa).

Component of the THO complex. In terms of tissue distribution, expressed in the developing neuromast.

The protein resides in the nucleus. It is found in the nucleoplasm. Its subcellular location is the nucleus matrix. It localises to the cytoplasm. The protein localises to the cytosol. Functionally, component of the THO subcomplex of the TREX complex which is thought to couple mRNA transcription, processing and nuclear export, and which specifically associates with spliced mRNA and not with unspliced pre-mRNA. Required for efficient export of polyadenylated RNA. The THOC1-THOC2-THOC3 core complex alone is sufficient to bind export factor NXF1-NXT1 and promote ATPase activity of DDX39B. TREX is recruited to spliced mRNAs by a transcription-independent mechanism, binds to mRNA upstream of the exon-junction complex (EJC) and is recruited in a splicing- and cap-dependent manner to a region near the 5' end of the mRNA where it functions in mRNA export to the cytoplasm via the TAP/NXF1 pathway. Regulates transcriptional elongation of a subset of genes. Involved in genome stability by preventing co-transcriptional R-loop formation. May play a role in hair cell formation, hence may be involved in hearing. In terms of biological role, participates in an apoptotic pathway which is characterized by activation of caspase-6, increases in the expression of BAK1 and BCL2L1 and activation of NF-kappa-B. This pathway does not require p53/TP53, nor does the presence of p53/TP53 affect the efficiency of cell killing. Activates a G2/M cell cycle checkpoint prior to the onset of apoptosis. Apoptosis is inhibited by association with RB1. Essential for early embryonic development. Required for normal gene expression during postnatal testis development. This chain is THO complex subunit 1 (thoc1), found in Danio rerio (Zebrafish).